The primary structure comprises 338 residues: MFQAFPGDYDSGSRCSSSPSAESQYLSSVDSFGSPPTAAASQECAGLGEMPGSFVPTVTAITTSQDLQWLVQPTLISSMAQSQGQPLASQPPAVDPYDMPGTSYSTPGMSGYSSGGASGSGGPSTSGTTSGPGPARPARARLRRPREETLTPEEEEKRRVRRERNKLAAAKCRNRRRELTDRLQAETDQLEEEKAELESEIAELQKEKERLEFVLVAHKPGCKIPYEEGPGPGPLAEVRDLPGSASTKEDGFSWLLPPPPAPPLPFQTSQDAAPNLTASLFTHSEVQVLGDPFPVVNPSYTSSFVLTCPEVSAFAGTQRPSGSDQPTDPLNSPSLLAL.

Disordered regions lie at residues 1-54 (MFQA…PGSF) and 80-162 (AQSQ…RVRR). Positions 13 to 31 (SRCSSSPSAESQYLSSVDS) are enriched in polar residues. S27 is modified (phosphoserine). Positions 113–124 (SSGGASGSGGPS) are enriched in gly residues. A compositionally biased stretch (low complexity) spans 125-137 (TSGTTSGPGPARP). The bZIP domain occupies 155-218 (EEKRRVRRER…ERLEFVLVAH (64 aa)). Residues 157 to 182 (KRRVRRERNKLAAAKCRNRRRELTDR) are basic motif. The interval 183–211 (LQAETDQLEEEKAELESEIAELQKEKERL) is leucine-zipper. Disordered stretches follow at residues 222–271 (CKIP…TSQD) and 315–338 (AGTQ…LLAL). The span at 256–265 (LPPPPAPPLP) shows a compositional bias: pro residues. Over residues 318 to 338 (QRPSGSDQPTDPLNSPSLLAL) the composition is skewed to polar residues.

The protein belongs to the bZIP family. Fos subfamily. In terms of assembly, heterodimer; binds to DNA as heterodimer. Component of an AP-1 transcription factor complex; composed of FOS-JUN heterodimers. As part of the AP-1 transcription factor complex, forms heterodimers with JUN, JUNB or JUND, thereby binding to the AP-1 consensus sequence and stimulating transcription. Interacts with the BAF multiprotein chromatin-remodeling complex subunits SMARCB1 and SMARCD1. Interacts with ARID1A and JUN. Post-translationally, phosphorylated.

The protein resides in the nucleus. Heterodimerizes with proteins of the JUN family to form an AP-1 transcription factor complex, thereby enhancing their DNA binding activity to an AP-1 consensus sequence 5'-TGA[GC]TCA-3' and enhancing their transcriptional activity. Exhibits transactivation activity in vitro. As part of the AP-1 complex, facilitates enhancer selection together with cell-type-specific transcription factors by collaboratively binding to nucleosomal enhancers and recruiting the SWI/SNF (BAF) chromatin remodeling complex to establish accessible chromatin. Together with JUN, plays a role in activation-induced cell death of T cells by binding to the AP-1 promoter site of FASLG/CD95L, and inducing its transcription in response to activation of the TCR/CD3 signaling pathway. Involved in the display of nurturing behavior towards newborns. May play a role in neurogenesis in the hippocampus and in learning and memory-related tasks by regulating the expression of various genes involved in neurogenesis, depression and epilepsy. Implicated in behavioral responses related to morphine reward and spatial memory. The polypeptide is Protein FosB (FOSB) (Canis lupus familiaris (Dog)).